The following is a 233-amino-acid chain: 2,3,4,5-tetrahydropyridine-2,6-dicarboxylate N-acetyltransferase (233 aa).

Belongs to the transferase hexapeptide repeat family. DapH subfamily.

The enzyme catalyses (S)-2,3,4,5-tetrahydrodipicolinate + acetyl-CoA + H2O = L-2-acetamido-6-oxoheptanedioate + CoA. It participates in amino-acid biosynthesis; L-lysine biosynthesis via DAP pathway; LL-2,6-diaminopimelate from (S)-tetrahydrodipicolinate (acetylase route): step 1/3. Catalyzes the transfer of an acetyl group from acetyl-CoA to tetrahydrodipicolinate. The sequence is that of 2,3,4,5-tetrahydropyridine-2,6-dicarboxylate N-acetyltransferase from Enterococcus faecalis (strain ATCC 700802 / V583).